The following is a 166-amino-acid chain: Large ribosomal subunit protein uL10 (166 aa).

Belongs to the universal ribosomal protein uL10 family. In terms of assembly, part of the ribosomal stalk of the 50S ribosomal subunit. The N-terminus interacts with L11 and the large rRNA to form the base of the stalk. The C-terminus forms an elongated spine to which L12 dimers bind in a sequential fashion forming a multimeric L10(L12)X complex.

In terms of biological role, forms part of the ribosomal stalk, playing a central role in the interaction of the ribosome with GTP-bound translation factors. This is Large ribosomal subunit protein uL10 from Aeromonas hydrophila subsp. hydrophila (strain ATCC 7966 / DSM 30187 / BCRC 13018 / CCUG 14551 / JCM 1027 / KCTC 2358 / NCIMB 9240 / NCTC 8049).